A 350-amino-acid chain; its full sequence is UDP-3-O-acylglucosamine N-acyltransferase (350 aa).

Histidine 257 (proton acceptor) is an active-site residue.

The protein belongs to the transferase hexapeptide repeat family. LpxD subfamily. In terms of assembly, homotrimer.

The catalysed reaction is a UDP-3-O-[(3R)-3-hydroxyacyl]-alpha-D-glucosamine + a (3R)-hydroxyacyl-[ACP] = a UDP-2-N,3-O-bis[(3R)-3-hydroxyacyl]-alpha-D-glucosamine + holo-[ACP] + H(+). Its pathway is bacterial outer membrane biogenesis; LPS lipid A biosynthesis. Catalyzes the N-acylation of UDP-3-O-acylglucosamine using 3-hydroxyacyl-ACP as the acyl donor. Is involved in the biosynthesis of lipid A, a phosphorylated glycolipid that anchors the lipopolysaccharide to the outer membrane of the cell. The chain is UDP-3-O-acylglucosamine N-acyltransferase from Chelativorans sp. (strain BNC1).